The primary structure comprises 794 residues: Protein SPA1-RELATED 4 (794 aa).

Positions 1–268 (MKGSSESSSR…MSELLQSEFI (268 aa)) constitute a Protein kinase domain. Residues 126–165 (SCSDSGSDEDATTKSREIGSSRQEEILSERRSKQQEEVKK) form a disordered region. Positions 136 to 165 (ATTKSREIGSSRQEEILSERRSKQQEEVKK) are enriched in basic and acidic residues. Residues 272–326 (RENLEEREAAMELRDRIEEQELLLEFLFLIQQRKQEAADKLQDTISLLSSDIDQV) are a coiled coil. Disordered stretches follow at residues 352-373 (QGAETTAAEEENDDNSIDEESK) and 428-447 (GRSSEKSSMSQPSKDPINDS). Residues 358–369 (AAEEENDDNSID) show a composition bias toward acidic residues. WD repeat units lie at residues 482–521 (NSSNLVCAIGFDRDGEFFATAGVNKKIKIFECESIIKDGR), 531–571 (ASRS…LVTE), 574–614 (EHEK…SIGT), 616–656 (KTKA…LPLC), 660–698 (GHHKTVSYVRFVDSSTLVSSSTDNTLKLWDLSMSISGIN), 707–746 (GHTNVKNFVGLSVSDGYIATGSETNEVFVYHKAFPMPVLS), and 762–794 (DASQFISSVCWRGQSSTLVAANSTGNIKILEMV). A DWD box motif is present at residues 635–649 (AFGSADHKVYYYDLR).

As to quaternary structure, interacts with COP1 and CO. Binds to CRY1 in response to blue light, this interaction prevents SPA1/COP1 complex formation and thus avoid COP1-dependent degradation of the transcription factor HY5 by the proteasome and promotes hypocotyl elongation.

It is found in the nucleus. In terms of biological role, repressor of photomorphogenesis in the light. Probably part of the COP1/SPA E3 ubiquitin-protein ligase complex. In Arabidopsis thaliana (Mouse-ear cress), this protein is Protein SPA1-RELATED 4 (SPA4).